The following is a 219-amino-acid chain: MLIHLQKVCPSEQVDHLRDLIGQGGFVDGGTTAGQVARAVKANEQLEAGARVDTVRSEVRKALMAHAGFVSFARPKTLSRILVSRYRDGMAYGPHIDDALMGGRRADLSFTLFLSDPDSYDGGELVMDGPDGETEIKLAAGDAVVYATSAIHQVAPVTRGERVAVVGWVRSLVRRPDQREILFDLDQVSAALFARDGKTRELDLVLKTKANLLRQWAED.

The Fe2OG dioxygenase domain occupies 77–171; the sequence is TLSRILVSRY…RVAVVGWVRS (95 aa). Residues H95, D97, and H152 each coordinate Fe cation. 2-oxoglutarate is bound at residue R162.

Requires Fe(2+) as cofactor. The cofactor is L-ascorbate.

The polypeptide is PKHD-type hydroxylase Mmar10_1675 (Maricaulis maris (strain MCS10) (Caulobacter maris)).